Consider the following 816-residue polypeptide: Cation/H(+) antiporter 8 (816 aa).

12 consecutive transmembrane segments (helical) span residues 64–84, 97–117, 127–147, 163–183, 197–214, 227–247, 255–275, 297–317, 343–363, 382–402, 413–433, and 447–467; these read PKLE…NILF, MMLA…NSII, IDVA…LKGV, VTGV…FNLK, VMLL…ARLL, VALS…IANV, ADGL…FAVV, IHGV…LSQF, LESF…MLRT, FAVA…SVIV, SIIL…FYLF, and ILVL…GFLY.

Belongs to the monovalent cation:proton antiporter 2 (CPA2) transporter (TC 2.A.37) family. CHX (TC 2.A.37.4) subfamily. In terms of tissue distribution, specifically expressed in pollen.

Its subcellular location is the membrane. May operate as a cation/H(+) antiporter. The protein is Cation/H(+) antiporter 8 (CHX8) of Arabidopsis thaliana (Mouse-ear cress).